The following is a 459-amino-acid chain: XK-related protein 3 (459 aa).

Helical transmembrane passes span 35-55 (FSII…LYMF), 68-88 (SFTI…LMFF), 97-117 (AALL…LHTI), 169-189 (IQAF…SLTI), 199-219 (LMTF…ILAI), 238-258 (VVMW…FFIA), 264-284 (SLPV…LEFW), 300-320 (MVGT…INFS), 345-365 (ILHY…FRFF), and 377-397 (LIAV…LLFY).

Belongs to the XK family. As to expression, expressed predominantly, if not exclusively, in testis.

Its subcellular location is the cell membrane. The polypeptide is XK-related protein 3 (XKR3) (Homo sapiens (Human)).